We begin with the raw amino-acid sequence, 287 residues long: 2-dehydro-3-deoxyphosphooctonate aldolase (287 aa).

The protein belongs to the KdsA family.

It is found in the cytoplasm. The enzyme catalyses D-arabinose 5-phosphate + phosphoenolpyruvate + H2O = 3-deoxy-alpha-D-manno-2-octulosonate-8-phosphate + phosphate. Its pathway is carbohydrate biosynthesis; 3-deoxy-D-manno-octulosonate biosynthesis; 3-deoxy-D-manno-octulosonate from D-ribulose 5-phosphate: step 2/3. The protein operates within bacterial outer membrane biogenesis; lipopolysaccharide biosynthesis. This chain is 2-dehydro-3-deoxyphosphooctonate aldolase, found in Rhodopseudomonas palustris (strain HaA2).